The primary structure comprises 140 residues: Nucleoside diphosphate kinase (140 aa).

Residues Lys-11, Phe-59, Arg-87, Thr-93, Arg-104, and Asn-114 each contribute to the ATP site. His-117 serves as the catalytic Pros-phosphohistidine intermediate.

Belongs to the NDK family. Homotetramer. Mg(2+) is required as a cofactor.

The protein resides in the cytoplasm. The enzyme catalyses a 2'-deoxyribonucleoside 5'-diphosphate + ATP = a 2'-deoxyribonucleoside 5'-triphosphate + ADP. It catalyses the reaction a ribonucleoside 5'-diphosphate + ATP = a ribonucleoside 5'-triphosphate + ADP. Major role in the synthesis of nucleoside triphosphates other than ATP. The ATP gamma phosphate is transferred to the NDP beta phosphate via a ping-pong mechanism, using a phosphorylated active-site intermediate. This chain is Nucleoside diphosphate kinase, found in Cereibacter sphaeroides (strain ATCC 17029 / ATH 2.4.9) (Rhodobacter sphaeroides).